The chain runs to 208 residues: Outer-membrane lipoprotein carrier protein (208 aa).

The N-terminal stretch at 1–24 (MRMNIVQKILSATCFALLPLLAHA) is a signal peptide.

The protein belongs to the LolA family. In terms of assembly, monomer.

It is found in the periplasm. Functionally, participates in the translocation of lipoproteins from the inner membrane to the outer membrane. Only forms a complex with a lipoprotein if the residue after the N-terminal Cys is not an aspartate (The Asp acts as a targeting signal to indicate that the lipoprotein should stay in the inner membrane). This Dechloromonas aromatica (strain RCB) protein is Outer-membrane lipoprotein carrier protein.